We begin with the raw amino-acid sequence, 415 residues long: Queuine tRNA-ribosyltransferase accessory subunit 2 (415 aa).

The Zn(2+) site is built by cysteine 351, cysteine 353, cysteine 356, and histidine 382.

Belongs to the queuine tRNA-ribosyltransferase family. QTRT2 subfamily. In terms of assembly, heterodimer of a catalytic subunit QTRT1 and an accessory subunit QTRT2. The cofactor is Zn(2+).

The protein resides in the cytoplasm. The protein localises to the mitochondrion outer membrane. Its function is as follows. Non-catalytic subunit of the queuine tRNA-ribosyltransferase (TGT) that catalyzes the base-exchange of a guanine (G) residue with queuine (Q) at position 34 (anticodon wobble position) in tRNAs with GU(N) anticodons (tRNA-Asp, -Asn, -His and -Tyr), resulting in the hypermodified nucleoside queuosine (7-(((4,5-cis-dihydroxy-2-cyclopenten-1-yl)amino)methyl)-7-deazaguanosine). This is Queuine tRNA-ribosyltransferase accessory subunit 2 from Pongo abelii (Sumatran orangutan).